The following is a 526-amino-acid chain: Peptide chain release factor 3 (526 aa).

The tr-type G domain occupies 8 to 277; that stretch reads NKRRTFAIIS…GLTEWAPKPQ (270 aa). GTP is bound by residues 17–24, 85–89, and 139–142; these read SHPDAGKT, DTPGH, and NKLD.

It belongs to the TRAFAC class translation factor GTPase superfamily. Classic translation factor GTPase family. PrfC subfamily.

It is found in the cytoplasm. Increases the formation of ribosomal termination complexes and stimulates activities of RF-1 and RF-2. It binds guanine nucleotides and has strong preference for UGA stop codons. It may interact directly with the ribosome. The stimulation of RF-1 and RF-2 is significantly reduced by GTP and GDP, but not by GMP. This is Peptide chain release factor 3 from Actinobacillus pleuropneumoniae serotype 3 (strain JL03).